We begin with the raw amino-acid sequence, 240 residues long: uncharacterized protein (240 aa).

The chain crosses the membrane as a helical span at residues 73–93 (LLGCLYFFIYFVAPTLGPVLF).

Belongs to the universal ribosomal protein uS3 family.

It localises to the mitochondrion membrane. This is an uncharacterized protein from Arabidopsis thaliana (Mouse-ear cress).